A 140-amino-acid chain; its full sequence is MQSVQCFGKKGNATAVAHCKVGKGLIKVNGAPLSLVQPEILRMKVYEPILVAGADKFAGVDIRVRVSGGGHVSQIYAIRQAISKAIVAYYQKFVDEHSKAELKKALITYDRTLLVADPRRMEPKKFGGHGARARQQKSYR.

Belongs to the universal ribosomal protein uS9 family. In terms of assembly, component of the small ribosomal subunit (SSU). Mature yeast ribosomes consist of a small (40S) and a large (60S) subunit. The 40S small subunit contains 1 molecule of ribosomal RNA (18S rRNA) and at least 33 different proteins. The large 60S subunit contains 3 rRNA molecules (25S, 5.8S and 5S rRNA) and at least 46 different proteins.

The protein resides in the cytoplasm. Component of the ribosome, a large ribonucleoprotein complex responsible for the synthesis of proteins in the cell. The small ribosomal subunit (SSU) binds messenger RNAs (mRNAs) and translates the encoded message by selecting cognate aminoacyl-transfer RNA (tRNA) molecules. The large subunit (LSU) contains the ribosomal catalytic site termed the peptidyl transferase center (PTC), which catalyzes the formation of peptide bonds, thereby polymerizing the amino acids delivered by tRNAs into a polypeptide chain. The nascent polypeptides leave the ribosome through a tunnel in the LSU and interact with protein factors that function in enzymatic processing, targeting, and the membrane insertion of nascent chains at the exit of the ribosomal tunnel. This chain is Small ribosomal subunit protein uS9A (rps1601), found in Schizosaccharomyces pombe (strain 972 / ATCC 24843) (Fission yeast).